The primary structure comprises 1197 residues: DExH-box ATP-dependent RNA helicase DExH3 (1197 aa).

Residues Leu-309–Pro-476 form the Helicase ATP-binding domain. Gly-322–Thr-329 contributes to the ATP binding site. The DEIH box motif lies at Asp-423 to His-426. The Helicase C-terminal domain maps to Leu-564–Gly-738.

Belongs to the DExH box helicase family.

The catalysed reaction is ATP + H2O = ADP + phosphate + H(+). The protein is DExH-box ATP-dependent RNA helicase DExH3 of Arabidopsis thaliana (Mouse-ear cress).